The chain runs to 491 residues: Probable CtpA-like serine protease (491 aa).

A disordered region spans residues 1-22 (MSESKDTTEVNQEVNEKASSQS). The segment covering 9 to 22 (EVNQEVNEKASSQS) has biased composition (polar residues). The chain crosses the membrane as a helical span at residues 34–54 (FIIILIVTILVTAMIAVFATI). The 83-residue stretch at 119 to 201 (TKSFNEDVSG…TKVTLTIERG (83 aa)) folds into the PDZ domain. Active-site charge relay system residues include Ser-324, Asp-335, and Lys-349.

Belongs to the peptidase S41A family.

The protein resides in the cell membrane. This is Probable CtpA-like serine protease from Staphylococcus saprophyticus subsp. saprophyticus (strain ATCC 15305 / DSM 20229 / NCIMB 8711 / NCTC 7292 / S-41).